The following is a 411-amino-acid chain: GTPase Obg (411 aa).

The Obg domain maps to 1-157; it reads MQFIDEARFV…REIRLELRVL (157 aa). A disordered region spans residues 20–45; sequence AVSFHREKYRPRGGPDGGRGGDGGSV. Residues 33 to 43 show a composition bias toward gly residues; it reads GPDGGRGGDGG. An OBG-type G domain is found at 158–330; that stretch reads SDVGLVGLPN…LERSAEAAPR (173 aa). GTP is bound by residues 164 to 171, 189 to 193, 212 to 215, 276 to 279, and 311 to 313; these read GLPNAGKS, FTTLT, DIPG, NKVD, and ARL. Mg(2+) contacts are provided by S171 and T191. An OCT domain is found at 335 to 411; the sequence is VFRPSWRGLR…RIGDVSFEFR (77 aa).

Belongs to the TRAFAC class OBG-HflX-like GTPase superfamily. OBG GTPase family. Monomer. It depends on Mg(2+) as a cofactor.

Its subcellular location is the cytoplasm. Functionally, an essential GTPase which binds GTP, GDP and possibly (p)ppGpp with moderate affinity, with high nucleotide exchange rates and a fairly low GTP hydrolysis rate. Plays a role in control of the cell cycle, stress response, ribosome biogenesis and in those bacteria that undergo differentiation, in morphogenesis control. This chain is GTPase Obg, found in Rubrobacter xylanophilus (strain DSM 9941 / JCM 11954 / NBRC 16129 / PRD-1).